The sequence spans 89 residues: Cell division protein FtsL (89 aa).

The Cytoplasmic segment spans residues 1-6; that stretch reads MAMNKL. A helical transmembrane segment spans residues 7–24; it reads NFLLLLAVCVSAFSVVMQ. At 25-89 the chain is on the periplasmic side; sequence QNQYRLNFTA…GNTFMVEHQR (65 aa). A coiled-coil region spans residues 33-73; that stretch reads TALDKAKKQEIALEQDYAQMRLQQARLANHEAIRAAAEKQN.

Belongs to the FtsL family. In terms of assembly, part of a complex composed of FtsB, FtsL and FtsQ.

It is found in the cell inner membrane. Essential cell division protein. May link together the upstream cell division proteins, which are predominantly cytoplasmic, with the downstream cell division proteins, which are predominantly periplasmic. This chain is Cell division protein FtsL, found in Neisseria meningitidis serogroup B (strain ATCC BAA-335 / MC58).